The primary structure comprises 187 residues: Elongation factor P (187 aa).

Belongs to the elongation factor P family.

It is found in the cytoplasm. The protein operates within protein biosynthesis; polypeptide chain elongation. Involved in peptide bond synthesis. Stimulates efficient translation and peptide-bond synthesis on native or reconstituted 70S ribosomes in vitro. Probably functions indirectly by altering the affinity of the ribosome for aminoacyl-tRNA, thus increasing their reactivity as acceptors for peptidyl transferase. This chain is Elongation factor P, found in Gloeobacter violaceus (strain ATCC 29082 / PCC 7421).